We begin with the raw amino-acid sequence, 59 residues long: Light-harvesting protein B-800-850 alpha chain A (59 aa).

Residues 1-11 (MNQARIWTVVK) lie on the Cytoplasmic side of the membrane. A helical transmembrane segment spans residues 12–35 (PTVGLPLLLGSVTVIAILVHFAVL). An a bacteriochlorophyll-binding site is contributed by His-31. Topologically, residues 36–59 (SHTTWFSKYWNGKAAAIESSVNVG) are periplasmic.

The protein belongs to the antenna complex alpha subunit family. In terms of assembly, the core complex is formed by different alpha and beta chains, binding bacteriochlorophyll molecules, and arranged most probably in tetrameric structures disposed around the reaction center. The non-pigmented gamma chains may constitute additional components.

The protein resides in the cell inner membrane. Functionally, antenna complexes are light-harvesting systems, which transfer the excitation energy to the reaction centers. This is Light-harvesting protein B-800-850 alpha chain A (pucAA) from Rhodopseudomonas palustris (strain ATCC BAA-98 / CGA009).